We begin with the raw amino-acid sequence, 365 residues long: Cyclin-D5-2 (365 aa).

Belongs to the cyclin family. Cyclin D subfamily.

This Oryza sativa subsp. japonica (Rice) protein is Cyclin-D5-2 (CYCD5-2).